Here is a 342-residue protein sequence, read N- to C-terminus: Metalloendoproteinase 4-MMP (342 aa).

Residues 1–34 (MHHHHHPCNRKPFTTIFSFFLLYLNLHNQQIIEA) form the signal peptide. Residues 35 to 124 (RNPSQFTTNP…KTAPFHTGKK (90 aa)) constitute a propeptide, activation peptide. The Cysteine switch signature appears at 104–111 (PRCGFPDD). Residues C106 and H252 each coordinate Zn(2+). E253 is an active-site residue. Zn(2+)-binding residues include H256 and H262. An N-linked (GlcNAc...) asparagine glycan is attached at N300. D317 carries the GPI-anchor amidated aspartate lipid modification. The propeptide at 318 to 342 (GSRIRSQGMIYSTLSTVIALCFLNW) is removed in mature form.

Belongs to the peptidase M10A family. Matrix metalloproteinases (MMPs) subfamily. Zn(2+) is required as a cofactor. In terms of tissue distribution, mostly expressed in flowers and stems, and, to a lower extent, in leaves and roots.

The protein localises to the cell membrane. Repressed by acetohydroxamic acid (AHA). Its function is as follows. Matrix metalloproteinases (MMPs) or matrixins may play a role in the degradation and remodeling of the extracellular matrix (ECM) during development or in response to stresses. Active on myelin basic protein (MBP) and, to some extent, on McaPLGLDpaAR-NH(2) (QF24) and beta-casein. This Arabidopsis thaliana (Mouse-ear cress) protein is Metalloendoproteinase 4-MMP.